Here is a 137-residue protein sequence, read N- to C-terminus: uncharacterized protein (137 aa).

The signal sequence occupies residues 1-15 (MKKLAIAGALLLLAG). Cysteine 16 carries the N-palmitoyl cysteine lipid modification. The S-diacylglycerol cysteine moiety is linked to residue cysteine 16.

It localises to the cell membrane. This is an uncharacterized protein from Escherichia coli (strain K12).